The sequence spans 122 residues: Large ribosomal subunit protein uL14 (122 aa).

It belongs to the universal ribosomal protein uL14 family. As to quaternary structure, part of the 50S ribosomal subunit. Forms a cluster with proteins L3 and L19. In the 70S ribosome, L14 and L19 interact and together make contacts with the 16S rRNA in bridges B5 and B8.

Binds to 23S rRNA. Forms part of two intersubunit bridges in the 70S ribosome. This Xylella fastidiosa (strain 9a5c) protein is Large ribosomal subunit protein uL14.